The sequence spans 301 residues: UDP-N-acetylenolpyruvoylglucosamine reductase (301 aa).

One can recognise an FAD-binding PCMH-type domain in the interval 30 to 194; that stretch reads VGGEADYLVF…LSVKFALAPG (165 aa). The active site involves arginine 173. Residue serine 223 is the Proton donor of the active site. Glutamate 293 is a catalytic residue.

Belongs to the MurB family. The cofactor is FAD.

Its subcellular location is the cytoplasm. It carries out the reaction UDP-N-acetyl-alpha-D-muramate + NADP(+) = UDP-N-acetyl-3-O-(1-carboxyvinyl)-alpha-D-glucosamine + NADPH + H(+). The protein operates within cell wall biogenesis; peptidoglycan biosynthesis. Its function is as follows. Cell wall formation. The protein is UDP-N-acetylenolpyruvoylglucosamine reductase of Streptococcus pneumoniae (strain 70585).